Reading from the N-terminus, the 121-residue chain is Fluoride-specific ion channel FluC 1 (121 aa).

Helical transmembrane passes span 3–23 (YVYI…ISFL), 35–55 (IANL…IAFF), 64–84 (AITT…LELI), and 92–112 (FITL…LCYV). G71 and T74 together coordinate Na(+).

This sequence belongs to the fluoride channel Fluc/FEX (TC 1.A.43) family.

Its subcellular location is the cell membrane. It carries out the reaction fluoride(in) = fluoride(out). Its activity is regulated as follows. Na(+) is not transported, but it plays an essential structural role and its presence is essential for fluoride channel function. Fluoride-specific ion channel. Important for reducing fluoride concentration in the cell, thus reducing its toxicity. The sequence is that of Fluoride-specific ion channel FluC 1 from Staphylococcus aureus (strain NCTC 8325 / PS 47).